The sequence spans 592 residues: MAPPVSERGLKSVVWRKIKTAVFDDCRKEGEWKIMLLDEFTTKLLSSCCKMTDLLEEGITVIENIYKNREPVRQMKALYFISPTPKSVDCFLRDFGSKSEKKYKAAYIYFTDFCPDSLFNKIKASCSKSIRRCKEINISFIPQESQVYTLDVPDAFYYCYSPDPSNASRKEVVMEAMAEQIVTVCATLDENPGVRYKSKPLDNASKLAQLVEKKLEDYYKIDEKGLIKGKTQSQLLIIDRGFDPVSTVLHELTFQAMAYDLLPIENDTYKYKTDGKEKEAVLEEDDDLWVRVRHRHIAVVLEEIPKLMKEISSTKKATEGKTSLSALTQLMKKMPHFRKQISKQVVHLNLAEDCMNKFKLNIEKLCKTEQDLALGTDAEGQRVKDSMLVLLPVLLNKNHDNCDKIRAVLLYIFGINGTTEENLDRLIHNVKIEDDSDMIRNWSHLGVPIVPPSQQAKPLRKDRSAEETFQLSRWTPFIKDIMEDAIDNRLDSKEWPYCSRCPAVWNGSGAVSARQKPRTNYLELDRKNGSRLIIFVIGGITYSEMRCAYEVSQAHKSCEVIIGSTHILTPRKLLDDIKMLNKSKDKVSFKDE.

The segment at 1-255 is mediates interaction with DOC2B; sequence MAPPVSERGL…STVLHELTFQ (255 aa).

It belongs to the STXBP/unc-18/SEC1 family. In terms of assembly, interacts with STX4. Interacts with DOC2B; the interaction is direct, occurs at the cell membrane, excludes interaction with STX4 and regulates glucose-stimulated insulin secretion. Post-translationally, phosphorylated by PKC in platelets in response to thrombin stimulation; phosphorylation inhibits binding to STX4. As to expression, ubiquitously expressed in all tissues tested.

It localises to the cytoplasm. Its subcellular location is the cytosol. It is found in the cell membrane. In terms of biological role, together with STX4 and VAMP2, may play a role in insulin-dependent movement of GLUT4 and in docking/fusion of intracellular GLUT4-containing vesicles with the cell surface in adipocytes. This chain is Syntaxin-binding protein 3 (Stxbp3), found in Mus musculus (Mouse).